The chain runs to 194 residues: Outer membrane protein A (194 aa).

The signal sequence occupies residues 1-24; it reads MNKPSKFALALAFAAVTASGVASA. The beta stranded transmembrane segment at 30–38 threads the bilayer; sequence WRNPYGNVW. The 117-residue stretch at 77–193 folds into the OmpA-like domain; the sequence is MAAKVVFNAD…RVEIEIVGSR (117 aa).

Belongs to the outer membrane OOP (TC 1.B.6) superfamily.

The protein resides in the cell outer membrane. Functionally, structural protein that may protect the integrity of the bacterium. The chain is Outer membrane protein A from Bordetella avium.